Reading from the N-terminus, the 193-residue chain is Ribonuclease HII (193 aa).

The 179-residue stretch at 15 to 193 (YIVAGVDEAG…SYHRKSFKFC (179 aa)) folds into the RNase H type-2 domain. The a divalent metal cation site is built by D21, E22, and D112.

It belongs to the RNase HII family. Mn(2+) serves as cofactor. Requires Mg(2+) as cofactor.

The protein resides in the cytoplasm. The enzyme catalyses Endonucleolytic cleavage to 5'-phosphomonoester.. Endonuclease that specifically degrades the RNA of RNA-DNA hybrids. This Rickettsia typhi (strain ATCC VR-144 / Wilmington) protein is Ribonuclease HII.